The chain runs to 258 residues: Cell division protein ZapD (258 aa).

Belongs to the ZapD family. In terms of assembly, interacts with FtsZ.

The protein resides in the cytoplasm. Cell division factor that enhances FtsZ-ring assembly. Directly interacts with FtsZ and promotes bundling of FtsZ protofilaments, with a reduction in FtsZ GTPase activity. This chain is Cell division protein ZapD, found in Coxiella burnetii (strain RSA 331 / Henzerling II).